A 352-amino-acid chain; its full sequence is C-C chemokine receptor type 5 (352 aa).

The Extracellular segment spans residues 1–30 (MDYQVSSPTYDIDYYTSEPCQKINVKQIAA). Y3 is subject to Sulfotyrosine. O-linked (GalNAc...) serine glycosylation is found at S6 and S7. Y10, Y14, and Y15 each carry sulfotyrosine. 2 disulfide bridges follow: C20–C269 and C101–C178. The chain crosses the membrane as a helical span at residues 31–58 (HLLPPLYSLVFIFGFVGNILVVLILINC). Over 59–68 (KRLKSMTDIY) the chain is Cytoplasmic. The helical transmembrane segment at 69 to 89 (LLNLAISDLLFLLTVPFWAHY) threads the bilayer. The Extracellular segment spans residues 90–102 (AAAQWDFGNIMCQ). Residues 103–124 (LLTGLYFIGFFSGIFFIILLTI) form a helical membrane-spanning segment. Topologically, residues 125-141 (DRYLAIVHAVFALKART) are cytoplasmic. The chain crosses the membrane as a helical span at residues 142–166 (VTFGVVTSVITWVVAVFASLPGIIF). Topologically, residues 167-198 (TRSQREGLHYTCSSHFPYSQYQFWKNFRTLKI) are extracellular. The chain crosses the membrane as a helical span at residues 199 to 218 (VILGLVLPLLVMVICYSGIL). Over 219-235 (KTLLRCRNEKKRHRAVR) the chain is Cytoplasmic. Residues 236-260 (LIFTIMIVYFLFWAPYNIVLLLNTF) form a helical membrane-spanning segment. Residues 261–277 (QEFFGLNNCSSSNRLDQ) are Extracellular-facing. Residues 278–301 (AMQVTETLGMTHCCINPIIYAFVG) traverse the membrane as a helical segment. The Cytoplasmic portion of the chain corresponds to 302 to 352 (EKFRNYLLVFFQKHIAKRFCKCCSIFQQEAPERASSVYTRSTGEQEISVGL). Residues C321, C323, and C324 are each lipidated (S-palmitoyl cysteine). Phosphoserine; by BARK1 occurs at positions 336, 337, 342, and 349.

Belongs to the G-protein coupled receptor 1 family. Interacts with PRAF2. Efficient ligand binding to CCL3/MIP-1alpha and CCL4/MIP-1beta requires sulfation, O-glycosylation and sialic acid modifications. Glycosylation on Ser-6 is required for efficient binding of CCL4. Interacts with GRK2. Interacts with ARRB1 and ARRB2. Interacts with CNIH4. Interacts with S100A4; this interaction stimulates T-lymphocyte chemotaxis. Post-translationally, sulfated on at least 2 of the N-terminal tyrosines. Sulfation is required for efficient binding of the chemokines, CCL3 and CCL4. In terms of processing, palmitoylation in the C-terminal is important for cell surface expression. Phosphorylation on serine residues in the C-terminal is stimulated by binding CC chemokines especially by APO-RANTES. Post-translationally, O-glycosylated, but not N-glycosylated. Ser-6 appears to be the major site even if Ser-7 may be also O-glycosylated. Also sialylated glycans present which contribute to chemokine binding. Thr-16 and Ser-17 may also be glycosylated and, if so, with small moieties such as a T-antigen.

The protein resides in the cell membrane. Receptor for a number of inflammatory CC-chemokines including CCL3/MIP-1-alpha, CCL4/MIP-1-beta and RANTES and subsequently transduces a signal by increasing the intracellular calcium ion level. May play a role in the control of granulocytic lineage proliferation or differentiation. Participates in T-lymphocyte migration to the infection site by acting as a chemotactic receptor. In Mandrillus sphinx (Mandrill), this protein is C-C chemokine receptor type 5 (CCR5).